Consider the following 293-residue polypeptide: Plant cysteine oxidase 1 (293 aa).

The Fe cation site is built by H148, H150, and H211. Residues 250-293 (SEDDDVLSSEEEKEGYAWLQERDDNPEDHTNVVGALYRGPKVED) form a disordered region. A compositionally biased stretch (acidic residues) spans 251–262 (EDDDVLSSEEEK). Residues 269-279 (QERDDNPEDHT) are compositionally biased toward basic and acidic residues.

Belongs to the cysteine dioxygenase family. Requires Fe(2+) as cofactor.

The protein localises to the nucleus. It is found in the cytoplasm. The catalysed reaction is L-cysteine + O2 = 3-sulfino-L-alanine + H(+). Its function is as follows. Catalyzes the oxidation of N-terminal cysteine residues (N-Cys), thus preparing the protein for N-end rule pathway-mediated proteasomal degradation, upstream of the N-end rule enzymes ATE1, ATE2 and PRT6. Controls the preparation of the group VII ethylene response factor (ERF-VII) proteins for degradation via the 26S proteasome N-end rule pathway. Acts as an oxygen sensor that controls the stability of ERF-VII proteins, which are stabilized in flooding-induced hypoxia, and regulate transcriptional adaptation to these adverse conditions. Not active on Cys located inside or at the C-terminus of a peptide. Acts redundantly with PCO2 to repress the anaerobic response. The protein is Plant cysteine oxidase 1 of Arabidopsis thaliana (Mouse-ear cress).